The sequence spans 469 residues: Keratin, type II cytoskeletal 7 (469 aa).

Serine 2 bears the N-acetylserine mark. Phosphoserine occurs at positions 2, 6, and 7. The interval 2–90 (SIHFSSPVFT…DPSLQRVRQE (89 aa)) is head. Serine 12 carries O-linked (GlcNAc) serine glycosylation. Position 20 is a dimethylated arginine; alternate (arginine 20). Residue arginine 20 is modified to Omega-N-methylarginine; alternate. Phosphoserine is present on residues serine 53, serine 71, and serine 83. The coil 1A stretch occupies residues 90 to 126 (EEREQIKTLNNKFASFIDKVRFLEQQNKLLETKWTLL). The region spanning 91 to 403 (EREQIKTLNN…KLLEGEESRL (313 aa)) is the IF rod domain. Threonine 97 is modified (phosphothreonine). The segment at 127-144 (QEQKSAKSSRLPDIFEAQ) is linker 1. Lysine 130 participates in a covalent cross-link: Glycyl lysine isopeptide (Lys-Gly) (interchain with G-Cter in SUMO2). The segment at 145–236 (IAGLRGQLEA…TLNETELTEL (92 aa)) is coil 1B. An N6-acetyllysine modification is found at lysine 179. The tract at residues 237-260 (QSQISDTSVVLSMDNSRSLDLDGI) is linker 12. A phosphoserine mark is found at serine 252 and serine 254. Residues 261–399 (IAEVKAQYEE…ATYRKLLEGE (139 aa)) are coil 2. Residues lysine 265 and lysine 286 each participate in a glycyl lysine isopeptide (Lys-Gly) (interchain with G-Cter in SUMO2) cross-link. Threonine 289 is subject to Phosphothreonine. Glycyl lysine isopeptide (Lys-Gly) (interchain with G-Cter in SUMO2) cross-links involve residues lysine 296 and lysine 331. Residues 400-469 (ESRLAGDGVG…ASASRRSARN (70 aa)) form a tail region.

It belongs to the intermediate filament family. In terms of assembly, heterotetramer of two type I and two type II keratins. Interacts with eukaryotic translation initiator factor 3 (eIF3) subunit EIF3S10. Interacts with GPER1. In terms of processing, arg-20 is dimethylated, probably to asymmetric dimethylarginine.

Blocks interferon-dependent interphase and stimulates DNA synthesis in cells. The protein is Keratin, type II cytoskeletal 7 of Pan troglodytes (Chimpanzee).